The chain runs to 226 residues: MNPIVINKLQRKLGYTFTHQELLQQALTHRSASSKHNERLEFLGDSILSYVIANALYQRFPRVDEGDMSRMRATLVRGNTLAEMAREFDLGECLRLGPGELKSGGYRRESILADTVEALIGGVFLDSDIQAVEQLILSWYASRLDQISPGDKQKDPKTRLQEFLQGRHLPLPSYLVVQVRGEAHDQEFTIHCQVSGMAEPVVGTGSSRRKAEQAAAEQALIKLGIE.

The region spanning 6-128 is the RNase III domain; sequence INKLQRKLGY…LIGGVFLDSD (123 aa). Position 41 (E41) interacts with Mg(2+). The active site involves D45. Mg(2+)-binding residues include D114 and E117. E117 is an active-site residue. Residues 155–225 enclose the DRBM domain; it reads DPKTRLQEFL…AEQALIKLGI (71 aa).

The protein belongs to the ribonuclease III family. Homodimer. Mg(2+) serves as cofactor.

The protein resides in the cytoplasm. The enzyme catalyses Endonucleolytic cleavage to 5'-phosphomonoester.. Its function is as follows. Digests double-stranded RNA. Involved in the processing of primary rRNA transcript to yield the immediate precursors to the large and small rRNAs (23S and 16S). Processes some mRNAs, and tRNAs when they are encoded in the rRNA operon. Processes pre-crRNA and tracrRNA of type II CRISPR loci if present in the organism. In Erwinia tasmaniensis (strain DSM 17950 / CFBP 7177 / CIP 109463 / NCPPB 4357 / Et1/99), this protein is Ribonuclease 3.